The primary structure comprises 212 residues: Outer surface protein C (212 aa).

The signal sequence occupies residues 1 to 18 (MKKNTLSAILMTLFLFIS). Cys19 carries N-palmitoyl cysteine lipidation. Cys19 carries S-diacylglycerol cysteine lipidation.

Belongs to the OspC lipoprotein family. As to quaternary structure, homodimer. Interacts with tick Ixodes ricinus salivary protein Iric-1. Binds human (host) plasminogen. The N-terminus is blocked.

It is found in the cell outer membrane. It localises to the cell surface. Functionally, major immunodominant protein in mammalian hosts. Required for initial stages of mammalian infection. Inhibits macrophage-mediated phagocytosis of the bacteria. Binds human plasminogen; this probably confers an extracellular protease activity on the bacteria that allows it to traverse tissue. Unlike closely related strain B31, its interaction with Ixodes ricinus salivary protein Iric-1 does not protect against antibody-mediated destruction in vitro. This is Outer surface protein C from Borreliella afzelii (strain PKo) (Borrelia afzelii).